The primary structure comprises 101 residues: Rho GTPase-activating protein 39 (101 aa).

Positions 1–96 (YEQCIAHYES…VLIQHLDTSF (96 aa)) constitute a Rho-GAP domain.

In terms of tissue distribution, preoptic area and testis.

This chain is Rho GTPase-activating protein 39 (Arhgap39), found in Rattus norvegicus (Rat).